Reading from the N-terminus, the 355-residue chain is UDP-N-acetylglucosamine--N-acetylmuramyl-(pentapeptide) pyrophosphoryl-undecaprenol N-acetylglucosamine transferase (355 aa).

UDP-N-acetyl-alpha-D-glucosamine-binding positions include T14–G16, N126, R162, S190, I243, A262–E267, and Q287.

It belongs to the glycosyltransferase 28 family. MurG subfamily.

The protein localises to the cell inner membrane. It carries out the reaction di-trans,octa-cis-undecaprenyl diphospho-N-acetyl-alpha-D-muramoyl-L-alanyl-D-glutamyl-meso-2,6-diaminopimeloyl-D-alanyl-D-alanine + UDP-N-acetyl-alpha-D-glucosamine = di-trans,octa-cis-undecaprenyl diphospho-[N-acetyl-alpha-D-glucosaminyl-(1-&gt;4)]-N-acetyl-alpha-D-muramoyl-L-alanyl-D-glutamyl-meso-2,6-diaminopimeloyl-D-alanyl-D-alanine + UDP + H(+). It participates in cell wall biogenesis; peptidoglycan biosynthesis. Cell wall formation. Catalyzes the transfer of a GlcNAc subunit on undecaprenyl-pyrophosphoryl-MurNAc-pentapeptide (lipid intermediate I) to form undecaprenyl-pyrophosphoryl-MurNAc-(pentapeptide)GlcNAc (lipid intermediate II). In Vibrio vulnificus (strain YJ016), this protein is UDP-N-acetylglucosamine--N-acetylmuramyl-(pentapeptide) pyrophosphoryl-undecaprenol N-acetylglucosamine transferase.